Consider the following 79-residue polypeptide: Putative membrane protein insertion efficiency factor (79 aa).

It belongs to the UPF0161 family.

It localises to the cell inner membrane. In terms of biological role, could be involved in insertion of integral membrane proteins into the membrane. The chain is Putative membrane protein insertion efficiency factor from Prochlorococcus marinus (strain NATL1A).